Consider the following 230-residue polypeptide: MGIDVAENTGEIYSNLAPREKLLAYGSVSLTDAELLAIFLRTGTRGLPVLRMAEFLLKEFGSLYHLLSADYDTFCSHKGMGLAKYAQLQAIAELAKRFFSSQFMHEDIMSSPSVTQEYLQNLLSGRDREIFVVLFLNNQNRVICHEEMFKGTINKVEVHPREIVRSAIKVNASSVILAHNHPSGHAEPSLADKIVTDKVIDACNLVGVKVLDHLVIGRQCCVSFAERGWI.

The MPN domain occupies 108 to 230 (IMSSPSVTQE…CVSFAERGWI (123 aa)). The Zn(2+) site is built by His179, His181, and Asp192. Residues 179–192 (HNHPSGHAEPSLAD) carry the JAMM motif motif.

This sequence belongs to the UPF0758 family. YicR subfamily.

The chain is UPF0758 protein plu4865 from Photorhabdus laumondii subsp. laumondii (strain DSM 15139 / CIP 105565 / TT01) (Photorhabdus luminescens subsp. laumondii).